The chain runs to 128 residues: Sulfurtransferase TusD (128 aa).

Cys-78 serves as the catalytic Cysteine persulfide intermediate.

This sequence belongs to the DsrE/TusD family. As to quaternary structure, heterohexamer, formed by a dimer of trimers. The hexameric TusBCD complex contains 2 copies each of TusB, TusC and TusD. The TusBCD complex interacts with TusE.

The protein localises to the cytoplasm. Part of a sulfur-relay system required for 2-thiolation of 5-methylaminomethyl-2-thiouridine (mnm(5)s(2)U) at tRNA wobble positions. Accepts sulfur from TusA and transfers it in turn to TusE. The sequence is that of Sulfurtransferase TusD from Klebsiella pneumoniae subsp. pneumoniae (strain ATCC 700721 / MGH 78578).